The primary structure comprises 122 residues: MARIAGVDLPKKKRVEYGLTYIYGIGLFTSRKILNAVGISYDKRVYELSEDEAAAIRKEIQEHYMVEGDLRKSVAMDIKALMDLGSYRGLRHRKGLPVRGQKTKTNARTRKGRRKTVGAATK.

Positions 98 to 116 (VRGQKTKTNARTRKGRRKT) are enriched in basic residues. The segment at 98-122 (VRGQKTKTNARTRKGRRKTVGAATK) is disordered.

It belongs to the universal ribosomal protein uS13 family. Part of the 30S ribosomal subunit. Forms a loose heterodimer with protein S19. Forms two bridges to the 50S subunit in the 70S ribosome.

Located at the top of the head of the 30S subunit, it contacts several helices of the 16S rRNA. In the 70S ribosome it contacts the 23S rRNA (bridge B1a) and protein L5 of the 50S subunit (bridge B1b), connecting the 2 subunits; these bridges are implicated in subunit movement. Contacts the tRNAs in the A and P-sites. This chain is Small ribosomal subunit protein uS13, found in Campylobacter fetus subsp. fetus (strain 82-40).